Here is a 383-residue protein sequence, read N- to C-terminus: Histidinol-phosphate aminotransferase (383 aa).

N6-(pyridoxal phosphate)lysine is present on K240.

The protein belongs to the class-II pyridoxal-phosphate-dependent aminotransferase family. Histidinol-phosphate aminotransferase subfamily. In terms of assembly, homodimer. The cofactor is pyridoxal 5'-phosphate.

The enzyme catalyses L-histidinol phosphate + 2-oxoglutarate = 3-(imidazol-4-yl)-2-oxopropyl phosphate + L-glutamate. It participates in amino-acid biosynthesis; L-histidine biosynthesis; L-histidine from 5-phospho-alpha-D-ribose 1-diphosphate: step 7/9. The sequence is that of Histidinol-phosphate aminotransferase from Oleidesulfovibrio alaskensis (strain ATCC BAA-1058 / DSM 17464 / G20) (Desulfovibrio alaskensis).